The chain runs to 356 residues: Sulfate/thiosulfate import ATP-binding protein CysA (356 aa).

Residues 3-237 form the ABC transporter domain; that stretch reads IEVKNLVKRF…PKNSFVFHFL (235 aa). 35 to 42 contributes to the ATP binding site; sequence GPSGSGKT.

It belongs to the ABC transporter superfamily. Sulfate/tungstate importer (TC 3.A.1.6) family. As to quaternary structure, the complex is composed of two ATP-binding proteins (CysA), two transmembrane proteins (CysT and CysW) and a solute-binding protein (CysP).

Its subcellular location is the cell inner membrane. The enzyme catalyses sulfate(out) + ATP + H2O = sulfate(in) + ADP + phosphate + H(+). The catalysed reaction is thiosulfate(out) + ATP + H2O = thiosulfate(in) + ADP + phosphate + H(+). Its function is as follows. Part of the ABC transporter complex CysAWTP involved in sulfate/thiosulfate import. Responsible for energy coupling to the transport system. This Leptospira interrogans serogroup Icterohaemorrhagiae serovar copenhageni (strain Fiocruz L1-130) protein is Sulfate/thiosulfate import ATP-binding protein CysA.